The sequence spans 194 residues: HTH-type transcriptional regulator BetI (194 aa).

In terms of domain architecture, HTH tetR-type spans 8 to 68 (EIRRAQLIDA…ATMRHVLRDL (61 aa)). The H-T-H motif DNA-binding region spans 31-50 (TLASVAQRANISTGIVSHYF).

It participates in amine and polyamine biosynthesis; betaine biosynthesis via choline pathway [regulation]. Its function is as follows. Repressor involved in the biosynthesis of the osmoprotectant glycine betaine. It represses transcription of the choline transporter BetT and the genes of BetAB involved in the synthesis of glycine betaine. This is HTH-type transcriptional regulator BetI from Burkholderia cenocepacia (strain HI2424).